The primary structure comprises 278 residues: PILR alpha-associated neural protein (278 aa).

The signal sequence occupies residues 1-27 (MWSAQLLSQLLPLWPLLLLSVLPPAQG). The interval 25–93 (AQGSSHRSPP…PSGFEEGPPS (69 aa)) is disordered. Over 28–174 (SSHRSPPAPA…FGGRGEGVDP (147 aa)) the chain is Extracellular. Threonine 136 carries an O-linked (GalNAc...) threonine glycan. A helical transmembrane segment spans residues 175–195 (QLYVTITISIIIVLVATGIIF). Residues 196 to 278 (KFCWDRSQKR…QLNRIPLVNL (83 aa)) are Cytoplasmic-facing. The tract at residues 206 to 278 (RRPSGQQGAL…QLNRIPLVNL (73 aa)) is disordered. Residues 209 to 225 (SGQQGALRQEESQQPLT) show a composition bias toward polar residues.

Post-translationally, O-glycosylation at Thr-136 is essential for recognition by PILRA. As to expression, mainly expressed in brain and spinal cord. Weak expression also detected in heart, kidney, spleen and lymph node. Virtually no expression detected in liver and embryo relative to brain.

It localises to the membrane. In terms of biological role, acts as a ligand for PILRA in neuronal tissues, where it may be involved in immune regulation. The chain is PILR alpha-associated neural protein (Pianp) from Mus musculus (Mouse).